The chain runs to 374 residues: Small ribosomal subunit protein uS4m (374 aa).

One can recognise an S4 RNA-binding domain in the interval 259–323 (GRLENFLMRL…KKLYFFIKSK (65 aa)).

Belongs to the universal ribosomal protein uS4 family.

The protein localises to the mitochondrion. The chain is Small ribosomal subunit protein uS4m (RPS4) from Acanthamoeba castellanii (Amoeba).